We begin with the raw amino-acid sequence, 136 residues long: Ergosterol biosynthetic protein 28 (136 aa).

4 helical membrane-spanning segments follow: residues 18 to 34 (VVVS…SFLT), 56 to 72 (FGIW…YCAY), 79 to 95 (VYFL…FHFL), and 109 to 125 (GLLS…WFMA).

The protein belongs to the ERG28 family. As to quaternary structure, heterotetramer of erg25, erg26, erg27 and erg28. Erg28 acts as a scaffold to tether erg27 and other 4,4-demethylation-related enzymes, forming a demethylation enzyme complex, in the endoplasmic reticulum.

It localises to the endoplasmic reticulum membrane. Its pathway is steroid metabolism; ergosterol biosynthesis. Part of the third module of ergosterol biosynthesis pathway that includes by the late steps of the pathway. Erg28 has a role as a scaffold to help anchor the catalytic components of the C-4 demethylation complex erg25, erg26 and erg27 to the endoplasmic reticulum. The third module or late pathway involves the ergosterol synthesis itself through consecutive reactions that mainly occur in the endoplasmic reticulum (ER) membrane. Firstly, the squalene synthase erg9 catalyzes the condensation of 2 farnesyl pyrophosphate moieties to form squalene, which is the precursor of all steroids. Secondly, squalene is converted into lanosterol by the consecutive action of the squalene epoxidase erg1 and the lanosterol synthase erg7. The lanosterol 14-alpha-demethylase erg11/cyp1 catalyzes C14-demethylation of lanosterol to produce 4,4'-dimethyl cholesta-8,14,24-triene-3-beta-ol. In the next steps, a complex process involving various demethylation, reduction and desaturation reactions catalyzed by the C-14 reductase erg24 and the C-4 demethylation complex erg25-erg26-erg27 leads to the production of zymosterol. Erg28 likely functions in the C-4 demethylation complex reaction by tethering erg26 and Erg27 to the endoplasmic reticulum or to facilitate interaction between these proteins. Then, the sterol 24-C-methyltransferase erg6 catalyzes the methyl transfer from S-adenosyl-methionine to the C-24 of zymosterol to form fecosterol. The C-8 sterol isomerase erg2 catalyzes the reaction which results in unsaturation at C-7 in the B ring of sterols and thus converts fecosterol to episterol. The sterol-C5-desaturases erg31 and erg32 then catalyze the introduction of a C-5 double bond in the B ring to produce 5-dehydroepisterol. The C-22 sterol desaturase erg5 further converts 5-dehydroepisterol into ergosta-5,7,22,24(28)-tetraen-3beta-ol by forming the C-22(23) double bond in the sterol side chain. Finally, ergosta-5,7,22,24(28)-tetraen-3beta-ol is substrate of the C-24(28) sterol reductase erg4 to produce ergosterol. In the genus Schizosaccharomyces, a second route exists between lanosterol and fecosterol, via the methylation of lanosterol to eburicol by erg6, followed by C14-demethylation by erg11/cyp1 and C4-demethylation by the demethylation complex erg25-erg26-erg27. In terms of biological role, extends the chronological lifespan when overexpressed. The polypeptide is Ergosterol biosynthetic protein 28 (Schizosaccharomyces pombe (strain 972 / ATCC 24843) (Fission yeast)).